We begin with the raw amino-acid sequence, 350 residues long: Arginine N-succinyltransferase (350 aa).

A succinyl-CoA-binding site is contributed by Leu125. The active-site Proton donor is the His229.

This sequence belongs to the arginine N-succinyltransferase family.

The catalysed reaction is succinyl-CoA + L-arginine = N(2)-succinyl-L-arginine + CoA + H(+). It functions in the pathway amino-acid degradation; L-arginine degradation via AST pathway; L-glutamate and succinate from L-arginine: step 1/5. Its function is as follows. Catalyzes the transfer of succinyl-CoA to arginine to produce N(2)-succinylarginine. In Yersinia pestis, this protein is Arginine N-succinyltransferase.